Reading from the N-terminus, the 168-residue chain is Lipoprotein signal peptidase (168 aa).

Transmembrane regions (helical) follow at residues 12–32 (WYWV…WVLA), 67–87 (WQRW…TIWL), and 93–113 (NMVR…GNLI). Active-site residues include Asp123 and Asp141. A helical membrane pass occupies residues 136–156 (AFNIADAAIFIGAVLIIIDSF).

The protein belongs to the peptidase A8 family.

It is found in the cell inner membrane. It catalyses the reaction Release of signal peptides from bacterial membrane prolipoproteins. Hydrolyzes -Xaa-Yaa-Zaa-|-(S,diacylglyceryl)Cys-, in which Xaa is hydrophobic (preferably Leu), and Yaa (Ala or Ser) and Zaa (Gly or Ala) have small, neutral side chains.. Its pathway is protein modification; lipoprotein biosynthesis (signal peptide cleavage). Its function is as follows. This protein specifically catalyzes the removal of signal peptides from prolipoproteins. This chain is Lipoprotein signal peptidase, found in Shewanella amazonensis (strain ATCC BAA-1098 / SB2B).